We begin with the raw amino-acid sequence, 527 residues long: Berberine bridge enzyme-like 10 (527 aa).

A signal peptide spans 1–20 (MEKLLVISLLLLISTSVTTS). Cys32 and Cys95 are disulfide-bonded. Asn53 carries an N-linked (GlcNAc...) asparagine glycan. The FAD-binding PCMH-type domain maps to 73–248 (TTPKPISVVA…LGYKIQLVPV (176 aa)). His110 bears the Pros-8alpha-FAD histidine mark. 2 N-linked (GlcNAc...) asparagine glycosylation sites follow: Asn137 and Asn293.

This sequence belongs to the oxygen-dependent FAD-linked oxidoreductase family. The cofactor is FAD.

Its subcellular location is the secreted. The protein resides in the cell wall. The sequence is that of Berberine bridge enzyme-like 10 from Arabidopsis thaliana (Mouse-ear cress).